The primary structure comprises 462 residues: Bifunctional protein HldE (462 aa).

The segment at 1–309 (MKPRILVLGD…EYERSIRKAP (309 aa)) is ribokinase. 186-189 (NKKE) lines the ATP pocket. Residue Asp254 is part of the active site. The segment at 336–462 (FTNGCFDILH…TAIVERMRSC (127 aa)) is cytidylyltransferase.

This sequence in the N-terminal section; belongs to the carbohydrate kinase PfkB family. It in the C-terminal section; belongs to the cytidylyltransferase family. In terms of assembly, homodimer.

It carries out the reaction D-glycero-beta-D-manno-heptose 7-phosphate + ATP = D-glycero-beta-D-manno-heptose 1,7-bisphosphate + ADP + H(+). It catalyses the reaction D-glycero-beta-D-manno-heptose 1-phosphate + ATP + H(+) = ADP-D-glycero-beta-D-manno-heptose + diphosphate. It functions in the pathway nucleotide-sugar biosynthesis; ADP-L-glycero-beta-D-manno-heptose biosynthesis; ADP-L-glycero-beta-D-manno-heptose from D-glycero-beta-D-manno-heptose 7-phosphate: step 1/4. It participates in nucleotide-sugar biosynthesis; ADP-L-glycero-beta-D-manno-heptose biosynthesis; ADP-L-glycero-beta-D-manno-heptose from D-glycero-beta-D-manno-heptose 7-phosphate: step 3/4. Functionally, catalyzes the phosphorylation of D-glycero-D-manno-heptose 7-phosphate at the C-1 position to selectively form D-glycero-beta-D-manno-heptose-1,7-bisphosphate. In terms of biological role, catalyzes the ADP transfer from ATP to D-glycero-beta-D-manno-heptose 1-phosphate, yielding ADP-D-glycero-beta-D-manno-heptose. The sequence is that of Bifunctional protein HldE from Nitratiruptor sp. (strain SB155-2).